The chain runs to 403 residues: 3-(3-hydroxy-phenyl)propionate transporter (403 aa).

The Cytoplasmic segment spans residues 1 to 16; sequence MSTRTPSSSSSRLMLT. Residues 17 to 37 traverse the membrane as a helical segment; sequence IGLCFLVALMEGLDLQAAGIA. At 38–53 the chain is on the periplasmic side; that stretch reads AGGIAQAFALDKMQMG. The helical transmembrane segment at 54–74 threads the bilayer; it reads WIFSAGILGLLPGALVGGMLA. The Cytoplasmic portion of the chain corresponds to 75–81; that stretch reads DRYGRKR. The helical transmembrane segment at 82 to 102 threads the bilayer; it reads ILIGSVALFGLFSLATAIAWD. Residues 103-105 are Periplasmic-facing; that stretch reads FPS. The chain crosses the membrane as a helical span at residues 106–126; that stretch reads LVFARLMTGVGLGAALPNLIA. Topologically, residues 127-142 are cytoplasmic; the sequence is LTSEAAGPRFRGTAVS. A helical membrane pass occupies residues 143–163; sequence LMYCGVPIGAALAATLGFAGA. Residue Asn-164 is a topological domain, periplasmic. A helical transmembrane segment spans residues 165-185; sequence LAWQTVFWVGGVVPLILVPLL. Residues 186-217 lie on the Cytoplasmic side of the membrane; it reads MRWLPESAVFAGEKQSAPPLRALFAPETATAT. Residues 218–238 form a helical membrane-spanning segment; the sequence is LLLWLCYFFTLLVVYMLINWL. Residues 239–253 are Periplasmic-facing; the sequence is PLLLVEQGFQPSQAA. The chain crosses the membrane as a helical span at residues 254–274; sequence GVMFALQMGAASGTLMLGALM. The Cytoplasmic segment spans residues 275–279; the sequence is DKLRP. A helical membrane pass occupies residues 280–300; the sequence is VTMSLLIYSGMLASLLALGTV. Residues 301-306 are Periplasmic-facing; that stretch reads SSFNGM. A helical transmembrane segment spans residues 307 to 327; that stretch reads LLAGFVAGLFATGGQSVLYAL. Residues 328-339 lie on the Cytoplasmic side of the membrane; it reads APLFYSSQIRAT. The helical transmembrane segment at 340–360 threads the bilayer; that stretch reads GVGTAVAVGRLGAMSGPLLAG. Residues 361 to 369 lie on the Periplasmic side of the membrane; it reads KMLALGTGT. The chain crosses the membrane as a helical span at residues 370 to 390; that stretch reads VGVMAASAPGILVAGLAVFIL. Over 391 to 403 the chain is Cytoplasmic; sequence MSRRSRIQPCADA.

The protein belongs to the major facilitator superfamily. Aromatic acid:H(+) symporter (AAHS) (TC 2.A.1.15) family.

It localises to the cell inner membrane. It catalyses the reaction 3-(3-hydroxyphenyl)propanoate(in) + H(+)(in) = 3-(3-hydroxyphenyl)propanoate(out) + H(+)(out). With respect to regulation, inhibited by carbonyl cyanide m-chlorophenylhydrazone (CCCP), which dissipates the proton motive force. Uptake of 3-(3-hydroxyphenyl)propionate (3HPP) across the cytoplasmic membrane. Transport is driven by the proton motive force. Does not transport benzoate, 3-hydroxybenzoate or gentisate. The polypeptide is 3-(3-hydroxy-phenyl)propionate transporter (Escherichia coli (strain K12)).